Here is a 332-residue protein sequence, read N- to C-terminus: Arrestin domain-containing protein 5 (332 aa).

Residues Ser311–Asn332 are disordered.

The protein belongs to the arrestin family.

The protein resides in the membrane. Plays an essential role in spermatogenesis. May be involved in the anchoring of the sperm head to the tail during spermatogenesis by affecting SEC22A-mediated SUN5 and NDC1 transport and localization. In Bos taurus (Bovine), this protein is Arrestin domain-containing protein 5 (ARRDC5).